A 207-amino-acid chain; its full sequence is Small ribosomal subunit protein uS4c (207 aa).

Positions 92-156 constitute an S4 RNA-binding domain; it reads MRLDNILFRL…YQSIITKRIE (65 aa).

Belongs to the universal ribosomal protein uS4 family. In terms of assembly, part of the 30S ribosomal subunit. Contacts protein S5. The interaction surface between S4 and S5 is involved in control of translational fidelity.

The protein resides in the plastid. Its subcellular location is the chloroplast. Functionally, one of the primary rRNA binding proteins, it binds directly to 16S rRNA where it nucleates assembly of the body of the 30S subunit. With S5 and S12 plays an important role in translational accuracy. This Equisetum sylvaticum (Wood horsetail) protein is Small ribosomal subunit protein uS4c (rps4).